The primary structure comprises 442 residues: Proline--tRNA ligase (442 aa).

The protein belongs to the class-II aminoacyl-tRNA synthetase family. ProS type 2 subfamily. Homodimer.

The protein localises to the cytoplasm. The enzyme catalyses tRNA(Pro) + L-proline + ATP = L-prolyl-tRNA(Pro) + AMP + diphosphate. Functionally, catalyzes the attachment of proline to tRNA(Pro) in a two-step reaction: proline is first activated by ATP to form Pro-AMP and then transferred to the acceptor end of tRNA(Pro). In Rhizobium meliloti (strain 1021) (Ensifer meliloti), this protein is Proline--tRNA ligase.